We begin with the raw amino-acid sequence, 349 residues long: tRNA pseudouridine synthase D (349 aa).

Phe-27 is a substrate binding site. Catalysis depends on Asp-80, which acts as the Nucleophile. Asn-129 serves as a coordination point for substrate. A TRUD domain is found at 155 to 303 (GVPNYFGAQR…VEAARRAMLL (149 aa)). Residue Phe-329 participates in substrate binding.

It belongs to the pseudouridine synthase TruD family.

The enzyme catalyses uridine(13) in tRNA = pseudouridine(13) in tRNA. Functionally, responsible for synthesis of pseudouridine from uracil-13 in transfer RNAs. The chain is tRNA pseudouridine synthase D from Escherichia coli (strain SMS-3-5 / SECEC).